Reading from the N-terminus, the 147-residue chain is Hemoglobin subunit beta-1 (147 aa).

Residue Val2 is modified to N-acetylvaline. The Globin domain occupies 3–147 (HLTGEEKAAV…VATALAHKYH (145 aa)). Lys18 bears the N6-succinyllysine mark. Position 45 is a phosphoserine (Ser45). Position 60 is an N6-succinyllysine (Lys60). Heme b-binding residues include His64 and His93. Arg105 carries the asymmetric dimethylarginine modification. Phosphothreonine is present on Thr124.

This sequence belongs to the globin family. As to quaternary structure, hb1 is a heterotetramer of two alpha chains and two beta-1 chains. As to expression, red blood cells.

Involved in oxygen transport from the lung to the various peripheral tissues. This is Hemoglobin subunit beta-1 (HBB1) from Chalinolobus morio (Chocolate-wattled bat).